A 474-amino-acid chain; its full sequence is Glutamate--tRNA ligase (474 aa).

Residues 10-20 (PSPTGYLHIGG) carry the 'HIGH' region motif. The Zn(2+) site is built by cysteine 107, cysteine 109, cysteine 134, and aspartate 136. The 'KMSKS' region motif lies at 244-248 (RLSKR). Residue lysine 247 participates in ATP binding.

Belongs to the class-I aminoacyl-tRNA synthetase family. Glutamate--tRNA ligase type 1 subfamily. As to quaternary structure, monomer. It depends on Zn(2+) as a cofactor.

Its subcellular location is the cytoplasm. The catalysed reaction is tRNA(Glu) + L-glutamate + ATP = L-glutamyl-tRNA(Glu) + AMP + diphosphate. Functionally, catalyzes the attachment of glutamate to tRNA(Glu) in a two-step reaction: glutamate is first activated by ATP to form Glu-AMP and then transferred to the acceptor end of tRNA(Glu). This Anaeromyxobacter sp. (strain K) protein is Glutamate--tRNA ligase.